The chain runs to 428 residues: Serine--tRNA ligase (428 aa).

231–233 (TAE) contributes to the L-serine binding site. 262-264 (RAE) is a binding site for ATP. Residue Glu-285 participates in L-serine binding. Residue 349 to 352 (EISS) participates in ATP binding. Position 385 (Ser-385) interacts with L-serine.

Belongs to the class-II aminoacyl-tRNA synthetase family. Type-1 seryl-tRNA synthetase subfamily. In terms of assembly, homodimer. The tRNA molecule binds across the dimer.

It localises to the cytoplasm. It catalyses the reaction tRNA(Ser) + L-serine + ATP = L-seryl-tRNA(Ser) + AMP + diphosphate + H(+). It carries out the reaction tRNA(Sec) + L-serine + ATP = L-seryl-tRNA(Sec) + AMP + diphosphate + H(+). It participates in aminoacyl-tRNA biosynthesis; selenocysteinyl-tRNA(Sec) biosynthesis; L-seryl-tRNA(Sec) from L-serine and tRNA(Sec): step 1/1. Its function is as follows. Catalyzes the attachment of serine to tRNA(Ser). Is also able to aminoacylate tRNA(Sec) with serine, to form the misacylated tRNA L-seryl-tRNA(Sec), which will be further converted into selenocysteinyl-tRNA(Sec). The sequence is that of Serine--tRNA ligase from Methylorubrum extorquens (strain CM4 / NCIMB 13688) (Methylobacterium extorquens).